Here is a 211-residue protein sequence, read N- to C-terminus: Uracil phosphoribosyltransferase (211 aa).

Residues Arg-78, Arg-103, and 130-138 (DPMLATGSS) each bind 5-phospho-alpha-D-ribose 1-diphosphate. Uracil-binding positions include Ile-193 and 198–200 (GDA). Asp-199 serves as a coordination point for 5-phospho-alpha-D-ribose 1-diphosphate.

This sequence belongs to the UPRTase family. Mg(2+) is required as a cofactor.

The catalysed reaction is UMP + diphosphate = 5-phospho-alpha-D-ribose 1-diphosphate + uracil. It participates in pyrimidine metabolism; UMP biosynthesis via salvage pathway; UMP from uracil: step 1/1. Its activity is regulated as follows. Allosterically activated by GTP. Functionally, catalyzes the conversion of uracil and 5-phospho-alpha-D-ribose 1-diphosphate (PRPP) to UMP and diphosphate. This Acinetobacter baylyi (strain ATCC 33305 / BD413 / ADP1) protein is Uracil phosphoribosyltransferase.